A 929-amino-acid chain; its full sequence is Thrombospondin-3b (929 aa).

Positions 1–22 (MELRKIVPNLLVLYVAVHFSQS) are cleaved as a signal peptide. Residues 24–192 (EIKVINVLEL…VESVKLALGG (169 aa)) enclose the Laminin G-like domain. The N-linked (GlcNAc...) asparagine glycan is linked to Asn45. Intrachain disulfides connect Cys277/Cys288, Cys282/Cys299, Cys319/Cys343, Cys349/Cys362, Cys356/Cys371, Cys374/Cys386, Cys392/Cys406, Cys400/Cys416, Cys418/Cys429, Cys445/Cys452, Cys457/Cys477, Cys493/Cys513, Cys516/Cys536, Cys552/Cys572, Cys575/Cys595, Cys613/Cys633, Cys653/Cys673, and Cys689/Cys910. An EGF-like 1; calcium-binding domain is found at 345–384 (DIDECAELSGSCVPNSVCINTVGSFKCGQCKAGFVGNQTV). Residue Asn381 is glycosylated (N-linked (GlcNAc...) asparagine). One can recognise an EGF-like 2 domain in the interval 388–430 (ARRTCETLGYSPCDVNSHCVMGRNSDVSCVCNVGWAGNGNICG). TSP type-3 repeat units follow at residues 431–465 (PDSD…NSGQ), 466–501 (EDTD…NKDQ), 502–524 (QNSD…NGDQ), 525–560 (LDTD…NPMQ), 561–583 (TDRD…DPLQ), 584–621 (SDMD…NSSQ), 622–661 (LDSD…NPSQ), and 662–697 (IDTD…EVTM). A compositionally biased stretch (basic and acidic residues) spans 602-613 (DGDGYQDTRDNC). Positions 602-651 (DGDGYQDTRDNCPEVPNSSQLDSDNDGIGDECDDDDDNDGIPDILPPGPD) are disordered. A glycan (N-linked (GlcNAc...) asparagine) is linked at Asn618. Residues 624-641 (SDNDGIGDECDDDDDNDG) are compositionally biased toward acidic residues. In terms of domain architecture, TSP C-terminal spans 701–915 (RAFQTVILDP…LGYRCNDSIP (215 aa)). Asn911 is a glycosylation site (N-linked (GlcNAc...) asparagine).

This sequence belongs to the thrombospondin family. In terms of assembly, oligomer; disulfide-linked.

Adhesive glycoprotein that mediates cell-to-cell and cell-to-matrix interactions. Can bind to fibrinogen, fibronectin, laminin and type V collagen. In Danio rerio (Zebrafish), this protein is Thrombospondin-3b.